Reading from the N-terminus, the 671-residue chain is Protein KHNYN (671 aa).

Disordered regions lie at residues 234–274, 294–327, 344–402, and 577–626; these read RVAG…LSGE, EVAP…AHVP, HNGS…GGNL, and GPTL…RKTR. The span at 250–272 shows a compositional bias: basic and acidic residues; that stretch reads TVEKEERKQDAVRDMGSGRKELS. The span at 351 to 365 shows a compositional bias: pro residues; that stretch reads PRVPSPPPAPEPPWP. Phosphoserine is present on serine 355. Basic and acidic residues predominate over residues 367 to 381; the sequence is GDRDRDRDRGDRGDK. The RNase NYN domain occupies 430 to 582; it reads LRHIVIDGSN…LGRNGPTLDE (153 aa). The segment covering 591–612 has biased composition (polar residues); sequence QGSSKTQQPSKGSTEQANQQQG.

It belongs to the N4BP1 family.

In Mus musculus (Mouse), this protein is Protein KHNYN (Khnyn).